A 587-amino-acid chain; its full sequence is Arginine--tRNA ligase (587 aa).

Positions 127–137 (PNLAKEMHVGH) match the 'HIGH' region motif.

The protein belongs to the class-I aminoacyl-tRNA synthetase family. As to quaternary structure, monomer.

The protein localises to the cytoplasm. The catalysed reaction is tRNA(Arg) + L-arginine + ATP = L-arginyl-tRNA(Arg) + AMP + diphosphate. The sequence is that of Arginine--tRNA ligase from Pseudomonas aeruginosa (strain LESB58).